Here is a 142-residue protein sequence, read N- to C-terminus: Large ribosomal subunit protein cL37 alpha (142 aa).

Residues 1-62 (MALLSPLLSL…AQKRGTVVAM (62 aa)) constitute a chloroplast transit peptide. Residues 123-142 (RKLRKRGAWPPSKMKKLKNV) form a disordered region.

Belongs to the chloroplast-specific ribosomal protein cL37 family. In terms of assembly, component of the chloroplast large ribosomal subunit (LSU). Mature 70S chloroplast ribosomes of higher plants consist of a small (30S) and a large (50S) subunit. The 30S small subunit contains 1 molecule of ribosomal RNA (16S rRNA) and 24 different proteins. The 50S large subunit contains 3 rRNA molecules (23S, 5S and 4.5S rRNA) and 33 different proteins.

It localises to the plastid. Its subcellular location is the chloroplast. Functionally, component of the chloroplast ribosome (chloro-ribosome), a dedicated translation machinery responsible for the synthesis of chloroplast genome-encoded proteins, including proteins of the transcription and translation machinery and components of the photosynthetic apparatus. This is Large ribosomal subunit protein cL37 alpha (PSRP5) from Spinacia oleracea (Spinach).